The chain runs to 406 residues: Phosphopentomutase (406 aa).

The Mn(2+) site is built by D10, D305, H310, D346, H347, and H358.

It belongs to the phosphopentomutase family. Requires Mn(2+) as cofactor.

The protein resides in the cytoplasm. It catalyses the reaction 2-deoxy-alpha-D-ribose 1-phosphate = 2-deoxy-D-ribose 5-phosphate. The enzyme catalyses alpha-D-ribose 1-phosphate = D-ribose 5-phosphate. The protein operates within carbohydrate degradation; 2-deoxy-D-ribose 1-phosphate degradation; D-glyceraldehyde 3-phosphate and acetaldehyde from 2-deoxy-alpha-D-ribose 1-phosphate: step 1/2. In terms of biological role, isomerase that catalyzes the conversion of deoxy-ribose 1-phosphate (dRib-1-P) and ribose 1-phosphate (Rib-1-P) to deoxy-ribose 5-phosphate (dRib-5-P) and ribose 5-phosphate (Rib-5-P), respectively. In Vibrio cholerae serotype O1 (strain ATCC 39315 / El Tor Inaba N16961), this protein is Phosphopentomutase.